The primary structure comprises 200 residues: Recombination protein RecR (200 aa).

The C4-type zinc-finger motif lies at 57-72; that stretch reads CRQCRTLTEDELCPQC. The Toprim domain maps to 80 to 175; it reads TLLCVVEGPM…ITSRIAHGVP (96 aa).

Belongs to the RecR family.

Its function is as follows. May play a role in DNA repair. It seems to be involved in an RecBC-independent recombinational process of DNA repair. It may act with RecF and RecO. This is Recombination protein RecR from Pseudomonas fluorescens (strain ATCC BAA-477 / NRRL B-23932 / Pf-5).